We begin with the raw amino-acid sequence, 291 residues long: Light-independent protochlorophyllide reductase iron-sulfur ATP-binding protein (291 aa).

Residues 10–15 (GIGKST) and K39 each bind ATP. S14 is a binding site for Mg(2+). Residues C95 and C129 each coordinate [4Fe-4S] cluster. 180–181 (NR) is an ATP binding site.

This sequence belongs to the NifH/BchL/ChlL family. As to quaternary structure, homodimer. Protochlorophyllide reductase is composed of three subunits; ChlL, ChlN and ChlB. [4Fe-4S] cluster serves as cofactor.

The protein resides in the plastid. Its subcellular location is the chloroplast. It carries out the reaction chlorophyllide a + oxidized 2[4Fe-4S]-[ferredoxin] + 2 ADP + 2 phosphate = protochlorophyllide a + reduced 2[4Fe-4S]-[ferredoxin] + 2 ATP + 2 H2O. It participates in porphyrin-containing compound metabolism; chlorophyll biosynthesis (light-independent). Its function is as follows. Component of the dark-operative protochlorophyllide reductase (DPOR) that uses Mg-ATP and reduced ferredoxin to reduce ring D of protochlorophyllide (Pchlide) to form chlorophyllide a (Chlide). This reaction is light-independent. The L component serves as a unique electron donor to the NB-component of the complex, and binds Mg-ATP. This Picea abies (Norway spruce) protein is Light-independent protochlorophyllide reductase iron-sulfur ATP-binding protein.